The chain runs to 94 residues: Selenoprotein K (94 aa).

A helical transmembrane segment spans residues 20–42 (LSFLTDFFWGAVEFIGLFFQTLV). A disordered region spans residues 48–94 (KDGNNSASSRFSDGRGPPGFPGRRRMGRINHGAGPTPPPMGGGGUGR). Over residues 49–58 (DGNNSASSRF) the composition is skewed to polar residues. A non-standard amino acid (selenocysteine) is located at residue selenocysteine 92.

The protein belongs to the selenoprotein K family.

Its subcellular location is the endoplasmic reticulum membrane. It is found in the cell membrane. In terms of biological role, required for Ca(2+) flux in immune cells and plays a role in T-cell proliferation and in T-cell and neutrophil migration. Involved in endoplasmic reticulum-associated degradation (ERAD) of soluble glycosylated proteins. Required for cell surface expression of CD36 and involved in macrophage uptake of low-density lipoprotein and in foam cell formation. Required for palmitoylation. The chain is Selenoprotein K (selenok) from Danio rerio (Zebrafish).